Here is a 66-residue protein sequence, read N- to C-terminus: MMLDTATEAGKGTLAVTGVGIAVYSPYEIASLCAAVLTALYVGAQLITLLPKMLDSIAELRRRFKK.

Over 1-29 (MMLDTATEAGKGTLAVTGVGIAVYSPYEI) the chain is Cytoplasmic. Residues 30–50 (ASLCAAVLTALYVGAQLITLL) traverse the membrane as a helical; Signal-anchor for type II membrane protein segment. At 51–66 (PKMLDSIAELRRRFKK) the chain is on the periplasmic side.

As to quaternary structure, homomultimer.

It is found in the host cell inner membrane. Its function is as follows. Accumulates harmlessly in the cytoplasmic membrane until it reaches a critical concentration that triggers the formation of nanometer-scale pores (pinholes) causing host cell membrane depolarization and endolysin refolding and release into the periplasmic space. Once the pinholin has permeabilized the host cell membrane, the SAR-endolysin is released into the periplasm and breaks down the peptidoglycan layer. Determines the precise timing of host cell lysis. Participates with the SAR-endolysin and the U-spanin protein in the sequential events which lead to the programmed host cell lysis releasing the mature viral particles from the host cell. This Pseudomonas phage phiKMV protein is Holin.